We begin with the raw amino-acid sequence, 320 residues long: GTP 3',8-cyclase (320 aa).

One can recognise a Radical SAM core domain in the interval 5–222 (KLSRPLKVLR…LMKKEFTFYP (218 aa)). R14 is a binding site for GTP. [4Fe-4S] cluster contacts are provided by C21, C25, and C28. A GTP-binding site is contributed by R65. Residue G69 coordinates S-adenosyl-L-methionine. T96 contacts GTP. Position 120 (S120) interacts with S-adenosyl-L-methionine. K157 is a GTP binding site. M191 contributes to the S-adenosyl-L-methionine binding site. The [4Fe-4S] cluster site is built by C253 and C256. 258–260 (RIR) is a GTP binding site. C270 is a binding site for [4Fe-4S] cluster.

The protein belongs to the radical SAM superfamily. MoaA family. Monomer and homodimer. Requires [4Fe-4S] cluster as cofactor.

The catalysed reaction is GTP + AH2 + S-adenosyl-L-methionine = (8S)-3',8-cyclo-7,8-dihydroguanosine 5'-triphosphate + 5'-deoxyadenosine + L-methionine + A + H(+). Its pathway is cofactor biosynthesis; molybdopterin biosynthesis. In terms of biological role, catalyzes the cyclization of GTP to (8S)-3',8-cyclo-7,8-dihydroguanosine 5'-triphosphate. In Aquifex aeolicus (strain VF5), this protein is GTP 3',8-cyclase.